We begin with the raw amino-acid sequence, 391 residues long: Pepsin B (391 aa).

Residues 1 to 16 form the signal peptide; it reads MKCLILALICLQLSEG. Positions 17–60 are cleaved as a propeptide — activation peptide; the sequence is LVVRQILHKGKSIRERMEENGVLEDFLRYNKKADPAAKFLFNKD. The Peptidase A1 domain occupies 75–388; that stretch reads YFGEISIGTP…DMANNRVGFA (314 aa). Asp-93 is an active-site residue. 2 cysteine pairs are disulfide-bonded: Cys-106/Cys-111 and Cys-270/Cys-274. Asp-279 is an active-site residue. Residues Cys-313 and Cys-346 are joined by a disulfide bond.

This sequence belongs to the peptidase A1 family.

The protein resides in the secreted. The catalysed reaction is Degradation of gelatin, little activity on hemoglobin. Specificity on B chain of insulin more restricted than that of pepsin A. Does not cleave 1-Phe-|-Val-2, 4-Gln-|-His-5 or 23-Gly-|-Phe-24.. Functionally, hydrolyzes various peptides including beta-endorphin, insulin B chain, dynorphin A, and neurokinin A, with high specificity for the cleavage of the Phe-Xaa bonds. This Monodelphis domestica (Gray short-tailed opossum) protein is Pepsin B.